The primary structure comprises 80 residues: Exodeoxyribonuclease 7 small subunit (80 aa).

This sequence belongs to the XseB family. In terms of assembly, heterooligomer composed of large and small subunits.

The protein localises to the cytoplasm. The catalysed reaction is Exonucleolytic cleavage in either 5'- to 3'- or 3'- to 5'-direction to yield nucleoside 5'-phosphates.. Bidirectionally degrades single-stranded DNA into large acid-insoluble oligonucleotides, which are then degraded further into small acid-soluble oligonucleotides. This is Exodeoxyribonuclease 7 small subunit from Lactobacillus helveticus (strain DPC 4571).